The sequence spans 412 residues: Motilin receptor (412 aa).

Residues 1 to 35 lie on the Extracellular side of the membrane; that stretch reads MGSPWNGSDGPEGAREPPWPALPPCDERRCSPFPL. Residue Asn-6 is glycosylated (N-linked (GlcNAc...) asparagine). Residues 36–56 traverse the membrane as a helical segment; that stretch reads GALVPVTAVCLCLFVVGVSGN. Residues 57 to 74 are Cytoplasmic-facing; it reads VVTVMLIGRYRDMRTTTN. The helical transmembrane segment at 75-94 threads the bilayer; sequence LYLGSMAVSDLLILLGLPFD. Over 95 to 112 the chain is Extracellular; sequence LYRLWRSRPWVFGPLLCR. Cys-111 and Cys-235 are oxidised to a cystine. The helical transmembrane segment at 113-134 threads the bilayer; it reads LSLYVGEGCTYATLLHMTALSV. The Cytoplasmic segment spans residues 135 to 157; the sequence is ERYLAICRPLRARVLVTRRRVRA. Residues 158–178 traverse the membrane as a helical segment; the sequence is LIAVLWAVALLSAGPFLFLVG. Over 179-246 the chain is Extracellular; that stretch reads VEQDPGISVV…PSPAQLGALR (68 aa). Residue Asn-192 is glycosylated (N-linked (GlcNAc...) asparagine). A helical transmembrane segment spans residues 247 to 270; it reads VMLWVTTAYFFLPFLCLSILYGLI. Residues 271-298 lie on the Cytoplasmic side of the membrane; sequence GRELWSSRRPLRGPAASGRERGHRQTVR. Residues 299 to 320 form a helical membrane-spanning segment; it reads VLLVVVLAFIICWLPFHVGRII. Topologically, residues 321–334 are extracellular; the sequence is YINTEDSRMMYFSQ. The chain crosses the membrane as a helical span at residues 335–358; it reads YFNIVALQLFYLSASINPILYNLI. Residues 359-412 lie on the Cytoplasmic side of the membrane; sequence SKKYRAAAFKLLLARKSRPRGFHRSRDTAGEVAGDTGGDTVGYTETSANVKTMG.

This sequence belongs to the G-protein coupled receptor 1 family. Expressed only in thyroid, stomach, and bone marrow.

The protein localises to the cell membrane. Functionally, receptor for motilin. This is Motilin receptor (MLNR) from Homo sapiens (Human).